The sequence spans 457 residues: Siroheme synthase (457 aa).

The precorrin-2 dehydrogenase /sirohydrochlorin ferrochelatase stretch occupies residues 1–204 (MDHLPIFCQL…NDQKAITETT (204 aa)). NAD(+) contacts are provided by residues 22–23 (DV) and 43–44 (LA). The residue at position 128 (Ser128) is a Phosphoserine. The tract at residues 216 to 457 (GEVVLVGAGP…RDKLNWFSNH (242 aa)) is uroporphyrinogen-III C-methyltransferase. Pro225 lines the S-adenosyl-L-methionine pocket. Asp248 functions as the Proton acceptor in the catalytic mechanism. Lys270 (proton donor) is an active-site residue. S-adenosyl-L-methionine-binding positions include 301 to 303 (GGD), Ile306, 331 to 332 (TA), Met382, and Gly411.

It in the N-terminal section; belongs to the precorrin-2 dehydrogenase / sirohydrochlorin ferrochelatase family. In the C-terminal section; belongs to the precorrin methyltransferase family.

It carries out the reaction uroporphyrinogen III + 2 S-adenosyl-L-methionine = precorrin-2 + 2 S-adenosyl-L-homocysteine + H(+). The enzyme catalyses precorrin-2 + NAD(+) = sirohydrochlorin + NADH + 2 H(+). The catalysed reaction is siroheme + 2 H(+) = sirohydrochlorin + Fe(2+). It participates in cofactor biosynthesis; adenosylcobalamin biosynthesis; precorrin-2 from uroporphyrinogen III: step 1/1. Its pathway is cofactor biosynthesis; adenosylcobalamin biosynthesis; sirohydrochlorin from precorrin-2: step 1/1. The protein operates within porphyrin-containing compound metabolism; siroheme biosynthesis; precorrin-2 from uroporphyrinogen III: step 1/1. It functions in the pathway porphyrin-containing compound metabolism; siroheme biosynthesis; siroheme from sirohydrochlorin: step 1/1. It participates in porphyrin-containing compound metabolism; siroheme biosynthesis; sirohydrochlorin from precorrin-2: step 1/1. Functionally, multifunctional enzyme that catalyzes the SAM-dependent methylations of uroporphyrinogen III at position C-2 and C-7 to form precorrin-2 via precorrin-1. Then it catalyzes the NAD-dependent ring dehydrogenation of precorrin-2 to yield sirohydrochlorin. Finally, it catalyzes the ferrochelation of sirohydrochlorin to yield siroheme. This is Siroheme synthase from Escherichia coli O157:H7 (strain EC4115 / EHEC).